Consider the following 417-residue polypeptide: Probable phosphoglycerate kinase (417 aa).

Positions 23, 24, 25, 26, 38, 39, 62, 63, 65, 66, 121, 122, 169, and 170 each coordinate (2R)-3-phosphoglycerate. An ADP-binding site is contributed by G213. CDP is bound at residue G213. 2 residues coordinate AMP: A214 and K215. A214 provides a ligand contact to ATP. A214 lines the Mg(2+) pocket. Residues A217 and D218 each coordinate Mg(2+). D218 is a binding site for CDP. K219 contacts AMP. K219 serves as a coordination point for ATP. An ADP-binding site is contributed by G237. G237 serves as a coordination point for CDP. Residues G238 and G312 each contribute to the AMP site. ATP-binding residues include G238 and G312. 3 residues coordinate CDP: G337, A339, and F342. F342 is a binding site for ADP. E343 is an AMP binding site. The ATP site is built by E343, D374, and T375. Position 374 (D374) interacts with Mg(2+).

Belongs to the phosphoglycerate kinase family. As to quaternary structure, monomer. Mg(2+) serves as cofactor.

It is found in the cytoplasm. It carries out the reaction (2R)-3-phosphoglycerate + ATP = (2R)-3-phospho-glyceroyl phosphate + ADP. It participates in carbohydrate degradation; glycolysis; pyruvate from D-glyceraldehyde 3-phosphate: step 2/5. This Caenorhabditis elegans protein is Probable phosphoglycerate kinase (pgk-1).